The primary structure comprises 722 residues: Polyribonucleotide nucleotidyltransferase (722 aa).

Mg(2+) contacts are provided by D487 and D493. The 60-residue stretch at 554–613 (PRIETFKIPTDKIREVIGTGGKVIREIVEKTGAKVNIEDDGTVKVASSDGESIKAAIKWI) folds into the KH domain. The S1 motif domain maps to 623-691 (GEIYEGTVVK…DRGKTRLSMK (69 aa)). Positions 691 to 722 (KVVDQDTGEDLEAKQKAEAKAEDEAPAQAAGE) are disordered. Positions 701–713 (LEAKQKAEAKAED) are enriched in basic and acidic residues.

Belongs to the polyribonucleotide nucleotidyltransferase family. Mg(2+) is required as a cofactor.

The protein localises to the cytoplasm. The enzyme catalyses RNA(n+1) + phosphate = RNA(n) + a ribonucleoside 5'-diphosphate. Its function is as follows. Involved in mRNA degradation. Catalyzes the phosphorolysis of single-stranded polyribonucleotides processively in the 3'- to 5'-direction. The sequence is that of Polyribonucleotide nucleotidyltransferase from Rhodopseudomonas palustris (strain BisB5).